The primary structure comprises 365 residues: Carbohydrate sulfotransferase 10 (365 aa).

Over 1–6 (MRRHWL) the chain is Cytoplasmic. A helical; Signal-anchor for type II membrane protein transmembrane segment spans residues 7 to 27 (LVGACGWVLLILMFVSKFINF). The Lumenal segment spans residues 28–356 (SFRIPGDYAG…RYQGDFSLFD (329 aa)). N-linked (GlcNAc...) asparagine glycosylation is found at Asn99 and Asn104. Residues 132–138 (PKVGNTQ) and 194–202 (RDPFERLIS) each bind 3'-phosphoadenylyl sulfate. An N-linked (GlcNAc...) asparagine glycan is attached at Asn325.

This sequence belongs to the sulfotransferase 2 family.

The protein resides in the golgi apparatus membrane. Catalyzes the transfer of sulfate to position 3 of terminal glucuronic acid of both protein- and lipid-linked oligosaccharides. Participates in biosynthesis of HNK-1 carbohydrate structure, a sulfated glucuronyl-lactosaminyl residue carried by many neural recognition molecules. This is Carbohydrate sulfotransferase 10 (chst10) from Danio rerio (Zebrafish).